The following is a 285-amino-acid chain: ATP synthase gamma chain (285 aa).

This sequence belongs to the ATPase gamma chain family. F-type ATPases have 2 components, CF(1) - the catalytic core - and CF(0) - the membrane proton channel. CF(1) has five subunits: alpha(3), beta(3), gamma(1), delta(1), epsilon(1). CF(0) has three main subunits: a, b and c.

The protein localises to the cell membrane. Produces ATP from ADP in the presence of a proton gradient across the membrane. The gamma chain is believed to be important in regulating ATPase activity and the flow of protons through the CF(0) complex. The polypeptide is ATP synthase gamma chain (Clostridium novyi (strain NT)).